Consider the following 88-residue polypeptide: Beta-defensin 115 (88 aa).

The first 27 residues, 1–27, serve as a signal peptide directing secretion; sequence MLPDHFSPLSGDIKLSVLALVVLVVLA. 3 disulfides stabilise this stretch: cysteine 38-cysteine 65, cysteine 45-cysteine 59, and cysteine 49-cysteine 66.

It belongs to the beta-defensin family.

Its subcellular location is the secreted. In terms of biological role, has antibacterial activity. This is Beta-defensin 115 (DEFB115) from Homo sapiens (Human).